Consider the following 305-residue polypeptide: uncharacterized protein (305 aa).

A helical transmembrane segment spans residues 8 to 28; sequence IGALVTAVIAIGIVFSHMILF.

The protein localises to the membrane. This is an uncharacterized protein from Bacillus subtilis (strain 168).